The primary structure comprises 140 residues: MNPRTILAFDFGTRSIGCAIGQELTGSARPLQSFKANDGVPDWQQIEKVLREWQPDLVVVGLPLNMDGSEQPLTQQARKFANRLHGRFGVQIALQDERLSTVEARAHLFAGGGYRALEKGRVDAASAALILESWFENQYR.

Belongs to the YqgF nuclease family.

The protein resides in the cytoplasm. Its function is as follows. Could be a nuclease involved in processing of the 5'-end of pre-16S rRNA. This is Putative pre-16S rRNA nuclease from Edwardsiella ictaluri (strain 93-146).